Here is a 272-residue protein sequence, read N- to C-terminus: 2-amino-3,7-dideoxy-D-threo-hept-6-ulosonate synthase (272 aa).

Catalysis depends on D33, which acts as the Proton acceptor. 1-deoxy-D-threo-hexo-2,5-diulose 6-phosphate contacts are provided by residues 33 to 37 and 153 to 155; these read DHGVS and YPR. The Proton donor role is filled by Y153. Residue K184 is the Schiff-base intermediate with substrate of the active site. 1-deoxy-D-threo-hexo-2,5-diulose 6-phosphate is bound by residues 209 to 210 and 237 to 238; these read GG and GR.

Belongs to the DeoC/FbaB aldolase family. ADHS subfamily. In terms of assembly, homodecamer.

The catalysed reaction is 1-deoxy-D-threo-hexo-2,5-diulose 6-phosphate + L-aspartate 4-semialdehyde = 2,3-dioxopropyl phosphate + 2-amino-2,3,7-trideoxy-D-lyxo-hept-6-ulosonate. Functionally, catalyzes a transaldol reaction between 6-deoxy-5-ketofructose 1-phosphate (DKFP) and L-aspartate semialdehyde (ASA) with an elimination of hydroxypyruvaldehyde phosphate to yield 2-amino-3,7-dideoxy-D-threo-hept-6-ulosonate (ADH). Plays a key role in an alternative pathway of the biosynthesis of 3-dehydroquinate (DHQ), which is involved in the canonical pathway for the biosynthesis of aromatic amino acids. The protein is 2-amino-3,7-dideoxy-D-threo-hept-6-ulosonate synthase of Methanococcus maripaludis (strain C7 / ATCC BAA-1331).